A 558-amino-acid polypeptide reads, in one-letter code: Acylase ACY 1 proenzyme (558 aa).

Thr368 acts as the Nucleophile in catalysis.

The protein belongs to the gamma-glutamyltransferase family. In terms of assembly, dimer of two non-identical chains processed from the same precursor.

The catalysed reaction is (7R)-7-(4-carboxybutanamido)cephalosporanate + H2O = (7R)-7-aminocephalosporanate + glutarate. The enzyme catalyses an N-terminal (5-L-glutamyl)-[peptide] + an alpha-amino acid = 5-L-glutamyl amino acid + an N-terminal L-alpha-aminoacyl-[peptide]. It carries out the reaction glutathione + H2O = L-cysteinylglycine + L-glutamate. It catalyses the reaction an S-substituted glutathione + H2O = an S-substituted L-cysteinylglycine + L-glutamate. Functionally, besides the cephalosporin acylase I activity which converts GL-7ACA into 7-ACA; this enzyme displays some gamma glutamyltranspeptidase activity. The protein is Acylase ACY 1 proenzyme (acyI) of Pseudomonas sp. (strain SE83).